Reading from the N-terminus, the 184-residue chain is Probable cobalt-precorrin-6B C(15)-methyltransferase (decarboxylating) (184 aa).

Residues Thr12, 36 to 40 (GCGTG), Asp59, and Ala87 contribute to the S-adenosyl-L-methionine site.

The protein belongs to the methyltransferase superfamily. Archaeal-type CbiT family.

The catalysed reaction is Co-precorrin-6B + S-adenosyl-L-methionine = Co-precorrin-7 + S-adenosyl-L-homocysteine + CO2. Its pathway is cofactor biosynthesis; adenosylcobalamin biosynthesis; cob(II)yrinate a,c-diamide from sirohydrochlorin (anaerobic route): step 8/10. In terms of biological role, catalyzes the methylation of C-15 in cobalt-precorrin-6B followed by the decarboxylation of C-12 to form cobalt-precorrin-7. This is Probable cobalt-precorrin-6B C(15)-methyltransferase (decarboxylating) from Methanosarcina mazei (strain ATCC BAA-159 / DSM 3647 / Goe1 / Go1 / JCM 11833 / OCM 88) (Methanosarcina frisia).